The following is a 63-amino-acid chain: Overexpressed in colon carcinoma 1 protein homolog (63 aa).

The segment covering Met-1 to Ser-10 has biased composition (polar residues). A disordered region spans residues Met-1–Gly-39.

The protein belongs to the OCC1 family.

This chain is Overexpressed in colon carcinoma 1 protein homolog, found in Mus musculus (Mouse).